Here is a 306-residue protein sequence, read N- to C-terminus: Probable L,D-transpeptidase YbiS (306 aa).

A signal peptide spans 1-24 (MNMKLKTLFAAAFAVVGFCSTASA). The 136-residue stretch at 99-234 (EGIVINSAEM…VPVGTRVQFI (136 aa)) folds into the L,D-TPase catalytic domain. Catalysis depends on His-194, which acts as the Proton donor/acceptor. Cys-210 functions as the Nucleophile in the catalytic mechanism.

It belongs to the YkuD family.

Its subcellular location is the periplasm. Its pathway is cell wall biogenesis; peptidoglycan biosynthesis. Functionally, responsible, at least in part, for anchoring of the major outer membrane lipoprotein (Lpp) to the peptidoglycan via a meso-diaminopimelyl-L-Lys- bond on the terminal residue of Lpp. This is Probable L,D-transpeptidase YbiS (ybiS) from Escherichia coli O6:H1 (strain CFT073 / ATCC 700928 / UPEC).